Reading from the N-terminus, the 207-residue chain is Ribosomal RNA small subunit methyltransferase G (207 aa).

S-adenosyl-L-methionine-binding positions include Gly73, Leu78, 124–125 (VE), and Arg139.

The protein belongs to the methyltransferase superfamily. RNA methyltransferase RsmG family.

It is found in the cytoplasm. It carries out the reaction guanosine(527) in 16S rRNA + S-adenosyl-L-methionine = N(7)-methylguanosine(527) in 16S rRNA + S-adenosyl-L-homocysteine. In terms of biological role, specifically methylates the N7 position of guanine in position 527 of 16S rRNA. This chain is Ribosomal RNA small subunit methyltransferase G, found in Salmonella choleraesuis (strain SC-B67).